The following is a 230-amino-acid chain: 5'-methylthioadenosine/S-adenosylhomocysteine nucleosidase (230 aa).

Catalysis depends on Glu12, which acts as the Proton acceptor. Residues Gly78, Ile153, and 174–175 (ME) each bind substrate. The active-site Proton donor is Asp198.

It belongs to the PNP/UDP phosphorylase family. MtnN subfamily.

It carries out the reaction S-adenosyl-L-homocysteine + H2O = S-(5-deoxy-D-ribos-5-yl)-L-homocysteine + adenine. The enzyme catalyses S-methyl-5'-thioadenosine + H2O = 5-(methylsulfanyl)-D-ribose + adenine. The catalysed reaction is 5'-deoxyadenosine + H2O = 5-deoxy-D-ribose + adenine. The protein operates within amino-acid biosynthesis; L-methionine biosynthesis via salvage pathway; S-methyl-5-thio-alpha-D-ribose 1-phosphate from S-methyl-5'-thioadenosine (hydrolase route): step 1/2. In terms of biological role, catalyzes the irreversible cleavage of the glycosidic bond in both 5'-methylthioadenosine (MTA) and S-adenosylhomocysteine (SAH/AdoHcy) to adenine and the corresponding thioribose, 5'-methylthioribose and S-ribosylhomocysteine, respectively. Also cleaves 5'-deoxyadenosine, a toxic by-product of radical S-adenosylmethionine (SAM) enzymes, into 5-deoxyribose and adenine. In Shewanella loihica (strain ATCC BAA-1088 / PV-4), this protein is 5'-methylthioadenosine/S-adenosylhomocysteine nucleosidase.